Reading from the N-terminus, the 185-residue chain is Ribosome-recycling factor (185 aa).

It belongs to the RRF family.

Its subcellular location is the cytoplasm. Functionally, responsible for the release of ribosomes from messenger RNA at the termination of protein biosynthesis. May increase the efficiency of translation by recycling ribosomes from one round of translation to another. This chain is Ribosome-recycling factor, found in Campylobacter hominis (strain ATCC BAA-381 / DSM 21671 / CCUG 45161 / LMG 19568 / NCTC 13146 / CH001A).